A 360-amino-acid polypeptide reads, in one-letter code: Phospho-N-acetylmuramoyl-pentapeptide-transferase (360 aa).

The next 10 helical transmembrane spans lie at Gly-27–Leu-47, Thr-71–Ala-91, Leu-93–Phe-113, Leu-134–Ala-154, Phe-168–Gly-188, Gly-199–Ser-219, Leu-239–Pro-259, Ala-262–Val-282, Ile-288–Val-308, and Gln-337–Leu-357.

This sequence belongs to the glycosyltransferase 4 family. MraY subfamily. Mg(2+) serves as cofactor.

The protein resides in the cell inner membrane. The catalysed reaction is UDP-N-acetyl-alpha-D-muramoyl-L-alanyl-gamma-D-glutamyl-meso-2,6-diaminopimeloyl-D-alanyl-D-alanine + di-trans,octa-cis-undecaprenyl phosphate = di-trans,octa-cis-undecaprenyl diphospho-N-acetyl-alpha-D-muramoyl-L-alanyl-D-glutamyl-meso-2,6-diaminopimeloyl-D-alanyl-D-alanine + UMP. The protein operates within cell wall biogenesis; peptidoglycan biosynthesis. Functionally, catalyzes the initial step of the lipid cycle reactions in the biosynthesis of the cell wall peptidoglycan: transfers peptidoglycan precursor phospho-MurNAc-pentapeptide from UDP-MurNAc-pentapeptide onto the lipid carrier undecaprenyl phosphate, yielding undecaprenyl-pyrophosphoryl-MurNAc-pentapeptide, known as lipid I. This chain is Phospho-N-acetylmuramoyl-pentapeptide-transferase, found in Mesorhizobium japonicum (strain LMG 29417 / CECT 9101 / MAFF 303099) (Mesorhizobium loti (strain MAFF 303099)).